The primary structure comprises 209 residues: Uridine kinase (209 aa).

12 to 19 is an ATP binding site; sequence GGTGSGKS.

Belongs to the uridine kinase family.

The protein resides in the cytoplasm. The enzyme catalyses uridine + ATP = UMP + ADP + H(+). It catalyses the reaction cytidine + ATP = CMP + ADP + H(+). The protein operates within pyrimidine metabolism; CTP biosynthesis via salvage pathway; CTP from cytidine: step 1/3. It participates in pyrimidine metabolism; UMP biosynthesis via salvage pathway; UMP from uridine: step 1/1. The sequence is that of Uridine kinase from Clostridium tetani (strain Massachusetts / E88).